The sequence spans 469 residues: E3 ubiquitin-protein ligase pellino homolog 3 (469 aa).

Positions 1-39 (MVLEGNPEVGSPRTSDLQHRGNKGSCVLSSPGEDAQPGE) are disordered. A Phosphoserine modification is found at Ser11.

This sequence belongs to the pellino family. Interacts with TRAF6, MAP3K14 and MAP3K7. Post-translationally, phosphorylated by IRAK1 enhancing its E3 ligase activity. In terms of tissue distribution, highly expressed in brain, heart and testis, and at lower level in kidney, liver, lung, placenta, small intestine, spleen and stomach. Isoform 1 is not expressed in lung.

The catalysed reaction is S-ubiquitinyl-[E2 ubiquitin-conjugating enzyme]-L-cysteine + [acceptor protein]-L-lysine = [E2 ubiquitin-conjugating enzyme]-L-cysteine + N(6)-ubiquitinyl-[acceptor protein]-L-lysine.. Its pathway is protein modification; protein ubiquitination. Functionally, E3 ubiquitin ligase catalyzing the covalent attachment of ubiquitin moieties onto substrate proteins. Involved in the TLR and IL-1 signaling pathways via interaction with the complex containing IRAK kinases and TRAF6. Mediates 'Lys-63'-linked polyubiquitination of IRAK1. Can activate AP1/JUN and ELK1. Acts as a regulator of innate immunity by mediating 'Lys-63'-linked polyubiquitination of RIPK2 downstream of NOD1 and NOD2, thereby transforming RIPK2 into a scaffolding protein for downstream effectors, ultimately leading to activation of the NF-kappa-B and MAP kinases signaling. Catalyzes 'Lys-63'-linked polyubiquitination of RIPK2 in parallel of XIAP. The protein is E3 ubiquitin-protein ligase pellino homolog 3 of Homo sapiens (Human).